The following is a 427-amino-acid chain: 3-phosphoshikimate 1-carboxyvinyltransferase (427 aa).

3-phosphoshikimate-binding residues include K20, S21, and R25. K20 contributes to the phosphoenolpyruvate binding site. The phosphoenolpyruvate site is built by G92 and R120. S166, Q168, D312, and K339 together coordinate 3-phosphoshikimate. Residue Q168 participates in phosphoenolpyruvate binding. The active-site Proton acceptor is D312. Residues R343 and R385 each coordinate phosphoenolpyruvate.

This sequence belongs to the EPSP synthase family. In terms of assembly, monomer.

Its subcellular location is the cytoplasm. The enzyme catalyses 3-phosphoshikimate + phosphoenolpyruvate = 5-O-(1-carboxyvinyl)-3-phosphoshikimate + phosphate. It functions in the pathway metabolic intermediate biosynthesis; chorismate biosynthesis; chorismate from D-erythrose 4-phosphate and phosphoenolpyruvate: step 6/7. Catalyzes the transfer of the enolpyruvyl moiety of phosphoenolpyruvate (PEP) to the 5-hydroxyl of shikimate-3-phosphate (S3P) to produce enolpyruvyl shikimate-3-phosphate and inorganic phosphate. This chain is 3-phosphoshikimate 1-carboxyvinyltransferase, found in Streptococcus mutans serotype c (strain ATCC 700610 / UA159).